Consider the following 423-residue polypeptide: O-methyltransferase aoiF (423 aa).

Position 273 (aspartate 273) interacts with S-adenosyl-L-methionine. Residue histidine 324 is the Proton acceptor of the active site.

Belongs to the class I-like SAM-binding methyltransferase superfamily. Cation-independent O-methyltransferase family.

The protein operates within secondary metabolite biosynthesis. Its function is as follows. O-methyltransferase; part of the gene cluster that mediates the biosynthesis of a methylated derivative of known natural products orthosporin and diaporthin. Within the pathway, aoiF catalyzes the biotransformation of orthosporin to diaporthin but also of diaporthin to the final product, by performing a tandem methylation of the polyketide core. Orthosporin is produced by an oxidoreductase that has still to be identified and that catalyzes the stereospecific reduction of the carbonyl moiety of the hexaketide isocoumarin scaffold produced by the non-reducing polyketide synthase aoiG to generate the S-configured secondary alcohol at C-11. This is O-methyltransferase aoiF from Aspergillus oryzae (strain ATCC 42149 / RIB 40) (Yellow koji mold).